Reading from the N-terminus, the 506-residue chain is Maturase K (506 aa).

Belongs to the intron maturase 2 family. MatK subfamily.

It localises to the plastid. Its subcellular location is the chloroplast. Its function is as follows. Usually encoded in the trnK tRNA gene intron. Probably assists in splicing its own and other chloroplast group II introns. This is Maturase K from Ocimum basilicum (Sweet basil).